The primary structure comprises 233 residues: Rano class II histocompatibility antigen, A beta chain (233 aa).

A beta-1 region spans residues 1-80 (DFVYQFKGLC…DTVCRYNYEE (80 aa)). The Extracellular segment spans residues 1–194 (DFVYQFKGLC…RAQSESAQSK (194 aa)). Residue asparagine 14 is glycosylated (N-linked (GlcNAc...) asparagine). The interval 81–184 (TEVPTSLRRL…SLESPVTVEW (104 aa)) is beta-2. The 89-residue stretch at 93 to 181 (PNVAISLSRT…DHASLESPVT (89 aa)) folds into the Ig-like C1-type domain. Residues 185 to 194 (RAQSESAQSK) are connecting peptide. The chain crosses the membrane as a helical span at residues 195–215 (MLSGIGGLVLGVIFLGLGLFI). The Cytoplasmic portion of the chain corresponds to 216-233 (RHKRQKGPQGPPPAGLLQ).

This sequence belongs to the MHC class II family.

It localises to the membrane. Its function is as follows. Involved in the presentation of foreign antigens to the immune system. This chain is Rano class II histocompatibility antigen, A beta chain (RT1-B), found in Rattus norvegicus (Rat).